The chain runs to 673 residues: Xaa-Pro aminopeptidase 2 (673 aa).

A signal peptide spans 1–21; it reads MAQACWGCYPWLVLICACAWG. 3 N-linked (GlcNAc...) asparagine glycosylation sites follow: Asn-34, Asn-48, and Asn-64. Arg-115 is a substrate binding site. Residues Asn-277, Asn-290, and Asn-294 are each glycosylated (N-linked (GlcNAc...) asparagine). A substrate-binding site is contributed by His-429. Position 449 (Asp-449) interacts with Mn(2+). Residues Asp-449, Asp-460, and His-523 each coordinate Zn(2+). Substrate contacts are provided by His-523, His-532, and Glu-554. 2 residues coordinate Zn(2+): Glu-554 and Glu-568. A lipid anchor (GPI-anchor amidated alanine) is attached at Ala-649. The propeptide at 650 to 673 is removed in mature form; the sequence is RAAPTTSLGSLMTVSALAILGWSV.

Belongs to the peptidase M24B family. In terms of assembly, homotrimer. Requires Zn(2+) as cofactor. In terms of processing, N-glycosylated. In terms of tissue distribution, kidney.

The protein localises to the cell membrane. It catalyses the reaction Release of any N-terminal amino acid, including proline, that is linked to proline, even from a dipeptide or tripeptide.. Its activity is regulated as follows. Inhibited by apstatin and the metal ion chelator EDTA. Potently inhibited by the converting enzyme inhibitors cilazaprilat; enalaprilat; L155,212; ramiprilat and YS 980. Also inhibited to a lesser extent by indolaprilat; quinaprilat; spiraprilat; captopril and zofenoprilat. Its function is as follows. Membrane-bound metalloprotease which catalyzes the removal of a penultimate prolyl residue from the N-termini of peptides, such as Arg-Pro-Pro. May play a role in the metabolism of the vasodilator bradykinin. This is Xaa-Pro aminopeptidase 2 (XPNPEP2) from Sus scrofa (Pig).